The sequence spans 401 residues: Enoyl-[acyl-carrier-protein] reductase [NADH] (401 aa).

Residues 48–53 (GASSGY), 74–75 (FE), 111–112 (DA), and 140–141 (LA) each bind NAD(+). Residue Y226 participates in substrate binding. The Proton donor role is filled by Y236. NAD(+) is bound by residues K245 and 274–276 (VVT).

The protein belongs to the TER reductase family. In terms of assembly, monomer.

It carries out the reaction a 2,3-saturated acyl-[ACP] + NAD(+) = a (2E)-enoyl-[ACP] + NADH + H(+). It functions in the pathway lipid metabolism; fatty acid biosynthesis. Involved in the final reduction of the elongation cycle of fatty acid synthesis (FAS II). Catalyzes the reduction of a carbon-carbon double bond in an enoyl moiety that is covalently linked to an acyl carrier protein (ACP). This chain is Enoyl-[acyl-carrier-protein] reductase [NADH], found in Xylella fastidiosa (strain Temecula1 / ATCC 700964).